The primary structure comprises 823 residues: Ciliated left-right organizer ZP-N domains-containing protein (823 aa).

An N-terminal signal peptide occupies residues 1-22 (MWGSPALAWAVWLACVQPTVFP). 4 disordered regions span residues 206-242 (MGLY…LLPL), 269-422 (LVHI…DLLH), 434-520 (GPFL…SPSP), and 632-656 (LPRE…EGPG). Over residues 216–230 (TVTVQSPRQGLLQRW) the composition is skewed to pro residues. Low complexity predominate over residues 389–402 (GPETPPAGVPPAAS).

Its subcellular location is the secreted. In terms of biological role, plays a role in left-right patterning process. The sequence is that of Ciliated left-right organizer ZP-N domains-containing protein from Homo sapiens (Human).